The chain runs to 338 residues: 1-aminocyclopropane-1-carboxylate deaminase (338 aa).

Lys51 carries the post-translational modification N6-(pyridoxal phosphate)lysine. Ser78 (nucleophile) is an active-site residue.

The protein belongs to the ACC deaminase/D-cysteine desulfhydrase family. Requires pyridoxal 5'-phosphate as cofactor.

It carries out the reaction 1-aminocyclopropane-1-carboxylate + H2O = 2-oxobutanoate + NH4(+). Functionally, catalyzes a cyclopropane ring-opening reaction, the irreversible conversion of 1-aminocyclopropane-1-carboxylate (ACC) to ammonia and alpha-ketobutyrate. Allows growth on ACC as a nitrogen source. This chain is 1-aminocyclopropane-1-carboxylate deaminase, found in Enterobacter cloacae.